Here is a 36-residue protein sequence, read N- to C-terminus: Photosystem I reaction center subunit VIII (36 aa).

Residues 9–29 (ILVPLVGLVFPAITMVSLFLY) form a helical membrane-spanning segment.

Belongs to the PsaI family.

It localises to the plastid. The protein resides in the chloroplast thylakoid membrane. In terms of biological role, may help in the organization of the PsaL subunit. This Zygnema circumcarinatum (Green alga) protein is Photosystem I reaction center subunit VIII.